We begin with the raw amino-acid sequence, 246 residues long: Probable phosphatase PBPRB2022 (246 aa).

Residues H8, H10, H16, H41, E74, H102, H132, D193, and H195 each contribute to the Zn(2+) site.

This sequence belongs to the PHP family. The cofactor is Zn(2+).

This is Probable phosphatase PBPRB2022 from Photobacterium profundum (strain SS9).